A 487-amino-acid polypeptide reads, in one-letter code: Phosphoglucosamine mutase (487 aa).

Catalysis depends on Ser134, which acts as the Phosphoserine intermediate. Mg(2+) is bound by residues Ser134, Asp277, Asp279, and Asp281. Position 134 is a phosphoserine (Ser134).

Belongs to the phosphohexose mutase family. Requires Mg(2+) as cofactor. In terms of processing, activated by phosphorylation.

It catalyses the reaction alpha-D-glucosamine 1-phosphate = D-glucosamine 6-phosphate. Catalyzes the conversion of glucosamine-6-phosphate to glucosamine-1-phosphate. In Gloeothece citriformis (strain PCC 7424) (Cyanothece sp. (strain PCC 7424)), this protein is Phosphoglucosamine mutase.